The primary structure comprises 307 residues: Ribosomal RNA small subunit methyltransferase H (307 aa).

Residues 32 to 34, D51, I82, D99, and Q106 each bind S-adenosyl-L-methionine; that span reads AGH.

This sequence belongs to the methyltransferase superfamily. RsmH family.

The protein resides in the cytoplasm. The enzyme catalyses cytidine(1402) in 16S rRNA + S-adenosyl-L-methionine = N(4)-methylcytidine(1402) in 16S rRNA + S-adenosyl-L-homocysteine + H(+). Functionally, specifically methylates the N4 position of cytidine in position 1402 (C1402) of 16S rRNA. In Campylobacter concisus (strain 13826), this protein is Ribosomal RNA small subunit methyltransferase H.